The sequence spans 291 residues: Proteasome subunit beta (291 aa).

A propeptide spans 1-56 (MTRSFPDRLPTNLAFPGISVINQSSFVDLLRRQAPELLPVSLGGGQSGGGQQLSHG) (removed in mature form; by autocatalysis). Thr57 functions as the Nucleophile in the catalytic mechanism.

The protein belongs to the peptidase T1B family. As to quaternary structure, the 20S proteasome core is composed of 14 alpha and 14 beta subunits that assemble into four stacked heptameric rings, resulting in a barrel-shaped structure. The two inner rings, each composed of seven catalytic beta subunits, are sandwiched by two outer rings, each composed of seven alpha subunits. The catalytic chamber with the active sites is on the inside of the barrel. Has a gated structure, the ends of the cylinder being occluded by the N-termini of the alpha-subunits. Is capped by the proteasome-associated ATPase, ARC.

The protein resides in the cytoplasm. The enzyme catalyses Cleavage of peptide bonds with very broad specificity.. It participates in protein degradation; proteasomal Pup-dependent pathway. The formation of the proteasomal ATPase ARC-20S proteasome complex, likely via the docking of the C-termini of ARC into the intersubunit pockets in the alpha-rings, may trigger opening of the gate for substrate entry. Interconversion between the open-gate and close-gate conformations leads to a dynamic regulation of the 20S proteasome proteolysis activity. Component of the proteasome core, a large protease complex with broad specificity involved in protein degradation. The polypeptide is Proteasome subunit beta (Mycobacterium leprae (strain Br4923)).